The chain runs to 229 residues: Cytochrome c oxidase subunit 2 (229 aa).

The Mitochondrial intermembrane portion of the chain corresponds to 1–14; the sequence is MAQQAQLGLQDAAS. The helical transmembrane segment at 15-45 threads the bilayer; sequence PIMEELIHFHDHTLTVVFLISVLIFYLIIVM. The Mitochondrial matrix segment spans residues 46 to 59; that stretch reads VTTTFMNKHSLDSQ. Residues 60–87 form a helical membrane-spanning segment; it reads EVEIVWTVMPAIVLITIALPSLRILYLT. Residues 88 to 229 lie on the Mitochondrial intermembrane side of the membrane; it reads DEISNPHLTI…ENWTTKVLAS (142 aa). The Cu cation site is built by His-161, Cys-196, Glu-198, Cys-200, His-204, and Met-207. Mg(2+) is bound at residue Glu-198.

The protein belongs to the cytochrome c oxidase subunit 2 family. As to quaternary structure, component of the cytochrome c oxidase (complex IV, CIV), a multisubunit enzyme composed of 14 subunits. The complex is composed of a catalytic core of 3 subunits MT-CO1, MT-CO2 and MT-CO3, encoded in the mitochondrial DNA, and 11 supernumerary subunits COX4I, COX5A, COX5B, COX6A, COX6B, COX6C, COX7A, COX7B, COX7C, COX8 and NDUFA4, which are encoded in the nuclear genome. The complex exists as a monomer or a dimer and forms supercomplexes (SCs) in the inner mitochondrial membrane with NADH-ubiquinone oxidoreductase (complex I, CI) and ubiquinol-cytochrome c oxidoreductase (cytochrome b-c1 complex, complex III, CIII), resulting in different assemblies (supercomplex SCI(1)III(2)IV(1) and megacomplex MCI(2)III(2)IV(2)). Found in a complex with TMEM177, COA6, COX18, COX20, SCO1 and SCO2. Interacts with TMEM177 in a COX20-dependent manner. Interacts with COX20. Interacts with COX16. Requires Cu cation as cofactor.

The protein resides in the mitochondrion inner membrane. It catalyses the reaction 4 Fe(II)-[cytochrome c] + O2 + 8 H(+)(in) = 4 Fe(III)-[cytochrome c] + 2 H2O + 4 H(+)(out). In terms of biological role, component of the cytochrome c oxidase, the last enzyme in the mitochondrial electron transport chain which drives oxidative phosphorylation. The respiratory chain contains 3 multisubunit complexes succinate dehydrogenase (complex II, CII), ubiquinol-cytochrome c oxidoreductase (cytochrome b-c1 complex, complex III, CIII) and cytochrome c oxidase (complex IV, CIV), that cooperate to transfer electrons derived from NADH and succinate to molecular oxygen, creating an electrochemical gradient over the inner membrane that drives transmembrane transport and the ATP synthase. Cytochrome c oxidase is the component of the respiratory chain that catalyzes the reduction of oxygen to water. Electrons originating from reduced cytochrome c in the intermembrane space (IMS) are transferred via the dinuclear copper A center (CU(A)) of subunit 2 and heme A of subunit 1 to the active site in subunit 1, a binuclear center (BNC) formed by heme A3 and copper B (CU(B)). The BNC reduces molecular oxygen to 2 water molecules using 4 electrons from cytochrome c in the IMS and 4 protons from the mitochondrial matrix. This chain is Cytochrome c oxidase subunit 2 (MT-CO2), found in Petromyzon marinus (Sea lamprey).